We begin with the raw amino-acid sequence, 137 residues long: Protein MGF 110-7L (137 aa).

Residues Met1–Ser20 form the signal peptide. 3 N-linked (GlcNAc...) asparagine; by host glycosylation sites follow: Asn69, Asn70, and Asn105.

Belongs to the asfaviruses V110 family.

The protein is Protein MGF 110-7L of Ornithodoros (relapsing fever ticks).